Reading from the N-terminus, the 316-residue chain is Arginase-1 (316 aa).

The tract at residues 1–26 (MAKERHSVGVIGAPFSKGQPRRGVEE) is disordered. Mn(2+) is bound by residues His101, Asp124, His126, and Asp128. Residues 126-130 (HADIN), 137-139 (CGN), and Asp183 contribute to the substrate site. Residues Asp232 and Asp234 each coordinate Mn(2+). Thr246 contributes to the substrate binding site.

The protein belongs to the arginase family. Homotrimer. The cofactor is Mn(2+). Strongest expression in liver.

It carries out the reaction L-arginine + H2O = urea + L-ornithine. Its pathway is nitrogen metabolism; urea cycle; L-ornithine and urea from L-arginine: step 1/1. The protein is Arginase-1 (arg1) of Xenopus laevis (African clawed frog).